We begin with the raw amino-acid sequence, 263 residues long: UDP-N-acetylenolpyruvoylglucosamine reductase (263 aa).

Residue R146 is part of the active site. S188 acts as the Proton donor in catalysis. The active site involves E258.

Belongs to the MurB family. FAD serves as cofactor.

The protein localises to the cytoplasm. It carries out the reaction UDP-N-acetyl-alpha-D-muramate + NADP(+) = UDP-N-acetyl-3-O-(1-carboxyvinyl)-alpha-D-glucosamine + NADPH + H(+). It participates in cell wall biogenesis; peptidoglycan biosynthesis. In terms of biological role, cell wall formation. This Helicobacter hepaticus (strain ATCC 51449 / 3B1) protein is UDP-N-acetylenolpyruvoylglucosamine reductase.